The sequence spans 251 residues: Eukaryotic translation initiation factor 4E-3 (251 aa).

A disordered region spans residues 200 to 251; that stretch reads DSSARTSSTVKPRICLPAKDPAPVKEKGPAATTSPSNPGTEATGTSPATPTP. A compositionally biased stretch (polar residues) spans 230–251; sequence ATTSPSNPGTEATGTSPATPTP.

The protein belongs to the eukaryotic initiation factor 4E family. EIF4F is a multi-subunit complex, the composition of which varies with external and internal environmental conditions. It is composed of at least eIF4A, eIF4E and eIF4G. eIF4E is also known to interact with other partners. Interacts with mxt. Component of the pid-1 variant of the PETISCO complex (also called the pid-3, erh-2, tofu-6, and ife-3 small RNA complex) containing at least pid-1, tofu-6, ife-3, pid-3, and erh-2, which is required for the biogenesis of a class of 21 nucleotide PIWI-interacting RNAs (piRNAs) that possess a uracil residue at the 5'-end (also called 21U-RNAs). Component of the tost-1 variant of the PETISCO complex (also called the pid-3, erh-2, tofu-6, and ife-3 small RNA complex) containing at least tost-1, tofu-6, ife-3, pid-3, and erh-2, which plays an essential role in embryogenesis. Within the pid-1 and tost-1 variants of the PETISCO complexes interacts with tofu-6 (via C-terminus). In contrast to the pid-1 variant of the PETISCO complex, the tost-1 variant of the PETISCO complex plays a minor role in the biogenesis of 21U-RNAs. In terms of tissue distribution, highly expressed in the germline (at protein level).

The protein localises to the cytoplasmic granule. It localises to the cytoplasm. Its subcellular location is the perinuclear region. Recognizes and binds the 7-methylguanosine-containing mRNA cap during an early step in the initiation of protein synthesis and facilitates ribosome binding by inducing the unwinding of the mRNAs secondary structures. All 5 eIF4E proteins bind monomethyl cap structures. Only ife-1, ife-2 and ife-5 bind trimethyl cap structures which result from trans-splicing. Translation of trimethyl cap structure mRNAs may be regulated by intracellular redox state; disulfide bonds change the width and depth of the cap-binding cavity determining selectivity to mRNA caps. Ife-3 is essential for viability. Component of the pid-1 and tost-1 variants of the PETISCO complexes, which have roles in the biogenesis of a class of 21 nucleotide PIWI-interacting RNAs (piRNAs) that possess a uracil residue at the 5'-end (also called 21U-RNAs) and embryogenesis, respectively. Within the pid-1 variant of the PETISCO complex binds to capped 21U-RNA precursor molecules, possibly playing a role in the processing of the 5' end of the molecules to promote binding of other complex components such as pid-3. However, it is not essential for the biogenesis of 21U-RNAs by itself. Within the tost-1 variant of the PETISCO complex binds to splice leader SL1 RNA fragments to possibly play a role in their processing. This Caenorhabditis elegans protein is Eukaryotic translation initiation factor 4E-3.